The sequence spans 274 residues: Large ribosomal subunit protein uL2 (274 aa).

The tract at residues V223–K274 is disordered.

The protein belongs to the universal ribosomal protein uL2 family. Part of the 50S ribosomal subunit. Forms a bridge to the 30S subunit in the 70S ribosome.

Its function is as follows. One of the primary rRNA binding proteins. Required for association of the 30S and 50S subunits to form the 70S ribosome, for tRNA binding and peptide bond formation. It has been suggested to have peptidyltransferase activity; this is somewhat controversial. Makes several contacts with the 16S rRNA in the 70S ribosome. This Shewanella amazonensis (strain ATCC BAA-1098 / SB2B) protein is Large ribosomal subunit protein uL2.